Here is a 422-residue protein sequence, read N- to C-terminus: uncharacterized protein (422 aa).

Residues 5–83 (CVVYVGNIPY…RRLRVDFPTA (79 aa)) form the RRM domain. Positions 337–358 (RSSSIPSSGSIRSPSLTTTSAQ) are disordered.

It is found in the nucleus. This is an uncharacterized protein from Schizosaccharomyces pombe (strain 972 / ATCC 24843) (Fission yeast).